A 257-amino-acid polypeptide reads, in one-letter code: UPF0246 protein ASA_3634 (257 aa).

Belongs to the UPF0246 family.

The protein is UPF0246 protein ASA_3634 of Aeromonas salmonicida (strain A449).